Here is a 46-residue protein sequence, read N- to C-terminus: Mu-segestritoxin-Sf1f (46 aa).

4 disulfides stabilise this stretch: C3/C19, C10/C22, C18/C42, and C24/C40. The keys region for toxin activity stretch occupies residues 31-33 (RPW).

The protein belongs to the neurotoxin 16 (SFI) family. Expressed by the venom gland.

It localises to the secreted. Its function is as follows. Insecticidal toxin. It inhibits insect voltage-gated sodium channels (Nav) by partially blocking the channel pore in DUM neurons from the American cockroach, not by acting as a gating modifier. The inhibition is only partially reversible after prolonged washout. In vivo, the toxin causes flaccid paralysis followed by death when injected into Heliothis virescens larvae. It also causes uncoordinated movements followed by full paralysis to sheep blowflies (Lucilia cuprina). When the toxin is fused to snowdrop lectin, it is orally active against larvae of the tomato moth (Laconobia oleracea), the rice brown planthopper (Nilaparvata lugens), and the peach-potato aphid (Myzus persicae). This is Mu-segestritoxin-Sf1f from Segestria florentina (Tube-web spider).